Consider the following 106-residue polypeptide: Immunoglobulin lambda constant 2 (106 aa).

One can recognise an Ig-like domain in the interval 7-101 (PSVTLFPPSS…EGSTVEKTVA (95 aa)). C28 and C87 are oxidised to a cystine.

Immunoglobulins are composed of two identical heavy chains and two identical light chains; disulfide-linked.

Its subcellular location is the secreted. The protein resides in the cell membrane. Its function is as follows. Constant region of immunoglobulin light chains. Immunoglobulins, also known as antibodies, are membrane-bound or secreted glycoproteins produced by B lymphocytes. In the recognition phase of humoral immunity, the membrane-bound immunoglobulins serve as receptors which, upon binding of a specific antigen, trigger the clonal expansion and differentiation of B lymphocytes into immunoglobulins-secreting plasma cells. Secreted immunoglobulins mediate the effector phase of humoral immunity, which results in the elimination of bound antigens. The antigen binding site is formed by the variable domain of one heavy chain, together with that of its associated light chain. Thus, each immunoglobulin has two antigen binding sites with remarkable affinity for a particular antigen. The variable domains are assembled by a process called V-(D)-J rearrangement and can then be subjected to somatic hypermutations which, after exposure to antigen and selection, allow affinity maturation for a particular antigen. In Homo sapiens (Human), this protein is Immunoglobulin lambda constant 2.